A 191-amino-acid chain; its full sequence is UPF0312 protein Sbal_3041 (191 aa).

The signal sequence occupies residues 1-22; the sequence is MKKQLLSALIGASLLAPMAASA.

Belongs to the UPF0312 family. Type 1 subfamily.

The protein resides in the periplasm. The sequence is that of UPF0312 protein Sbal_3041 from Shewanella baltica (strain OS155 / ATCC BAA-1091).